We begin with the raw amino-acid sequence, 223 residues long: Ribonuclease T (223 aa).

The 175-residue stretch at 20 to 194 folds into the Exonuclease domain; it reads VVIDVETAGF…YDTNQTALLF (175 aa). Mg(2+) is bound by residues Asp23, Glu25, His181, and Asp186. The Proton donor/acceptor role is filled by His181.

The protein belongs to the RNase T family. As to quaternary structure, homodimer. It depends on Mg(2+) as a cofactor.

Trims short 3' overhangs of a variety of RNA species, leaving a one or two nucleotide 3' overhang. Responsible for the end-turnover of tRNA: specifically removes the terminal AMP residue from uncharged tRNA (tRNA-C-C-A). Also appears to be involved in tRNA biosynthesis. The polypeptide is Ribonuclease T (Pectobacterium atrosepticum (strain SCRI 1043 / ATCC BAA-672) (Erwinia carotovora subsp. atroseptica)).